The sequence spans 66 residues: Cold shock-like protein CspLA (66 aa).

Residues 4–63 (GTVKWFNAEKGFGFIERENGDDVFVHFSAIQGDGFKSLDEGQAVTFDVEEGQRGPQAANV) form the CSD domain.

In terms of assembly, homodimer.

Its subcellular location is the cytoplasm. This Listeria innocua serovar 6a (strain ATCC BAA-680 / CLIP 11262) protein is Cold shock-like protein CspLA (cspLA).